The following is a 111-amino-acid chain: DNA-binding protein AF_2068 (111 aa).

Belongs to the PDCD5 family.

This chain is DNA-binding protein AF_2068, found in Archaeoglobus fulgidus (strain ATCC 49558 / DSM 4304 / JCM 9628 / NBRC 100126 / VC-16).